The chain runs to 728 residues: Phosphoribosylformylglycinamidine synthase subunit PurL (728 aa).

His54 is an active-site residue. Tyr57 and Lys96 together coordinate ATP. Glu98 is a Mg(2+) binding site. Residues 99–102 (SHNH) and Arg121 contribute to the substrate site. The Proton acceptor role is filled by His100. Asp122 is a Mg(2+) binding site. Gln245 contacts substrate. Residue Asp273 participates in Mg(2+) binding. 317–319 (ETQ) contacts substrate. ATP is bound by residues Asp495 and Gly532. Asn533 provides a ligand contact to Mg(2+). Ser535 lines the substrate pocket.

This sequence belongs to the FGAMS family. As to quaternary structure, monomer. Part of the FGAM synthase complex composed of 1 PurL, 1 PurQ and 2 PurS subunits.

Its subcellular location is the cytoplasm. The enzyme catalyses N(2)-formyl-N(1)-(5-phospho-beta-D-ribosyl)glycinamide + L-glutamine + ATP + H2O = 2-formamido-N(1)-(5-O-phospho-beta-D-ribosyl)acetamidine + L-glutamate + ADP + phosphate + H(+). Its pathway is purine metabolism; IMP biosynthesis via de novo pathway; 5-amino-1-(5-phospho-D-ribosyl)imidazole from N(2)-formyl-N(1)-(5-phospho-D-ribosyl)glycinamide: step 1/2. Functionally, part of the phosphoribosylformylglycinamidine synthase complex involved in the purines biosynthetic pathway. Catalyzes the ATP-dependent conversion of formylglycinamide ribonucleotide (FGAR) and glutamine to yield formylglycinamidine ribonucleotide (FGAM) and glutamate. The FGAM synthase complex is composed of three subunits. PurQ produces an ammonia molecule by converting glutamine to glutamate. PurL transfers the ammonia molecule to FGAR to form FGAM in an ATP-dependent manner. PurS interacts with PurQ and PurL and is thought to assist in the transfer of the ammonia molecule from PurQ to PurL. The sequence is that of Phosphoribosylformylglycinamidine synthase subunit PurL from Macrococcus caseolyticus (strain JCSC5402) (Macrococcoides caseolyticum).